We begin with the raw amino-acid sequence, 574 residues long: Actin-binding protein wsp1 (574 aa).

Positions 19 to 130 (IPKSTNKIIA…KKVLDKGCHP (112 aa)) constitute a WH1 domain. Disordered regions lie at residues 144–186 (KGSS…ELLN), 221–494 (AGTP…IAEL), and 517–574 (KSRK…DEWD). Residues 149-158 (HAPNNSNIQP) are compositionally biased toward polar residues. 2 stretches are compositionally biased toward pro residues: residues 230–240 (PPIPPSIPSSR) and 251–260 (PAPPPIPPPS). Low complexity-rich tracts occupy residues 297-306 (SRVSAAALAA) and 324-335 (KPPIGNGSSNSS). Pro residues predominate over residues 352–368 (PLPPQGRSAPPPPPPRS). S386 carries the phosphoserine modification. Over residues 415–485 (PPVPTPPSLP…PPPAPAPAPA (71 aa)) the composition is skewed to pro residues. A WH2 domain is found at 499 to 518 (GRANLMASIRASGGMDLLKS). Residues 521–545 (VSASPSVASTKTSNPPVEAPPSNNL) show a composition bias toward polar residues. A compositionally biased stretch (acidic residues) spans 563 to 574 (SDEEDEDDDEWD).

In terms of assembly, interacts with vrp1.

It is found in the cytoplasm. Its subcellular location is the cytoskeleton. In terms of biological role, has a role in regulating actin assembly, so regulating polarized growth. This Schizosaccharomyces pombe (strain 972 / ATCC 24843) (Fission yeast) protein is Actin-binding protein wsp1 (wsp1).